We begin with the raw amino-acid sequence, 325 residues long: Beta-ketoacyl-[acyl-carrier-protein] synthase III (325 aa).

Residues Cys-119 and His-252 contribute to the active site. Residues 253–257 are ACP-binding; it reads QANIR. Asn-282 is an active-site residue.

Belongs to the thiolase-like superfamily. FabH family. As to quaternary structure, homodimer.

It localises to the cytoplasm. The catalysed reaction is malonyl-[ACP] + acetyl-CoA + H(+) = 3-oxobutanoyl-[ACP] + CO2 + CoA. It participates in lipid metabolism; fatty acid biosynthesis. Its function is as follows. Catalyzes the condensation reaction of fatty acid synthesis by the addition to an acyl acceptor of two carbons from malonyl-ACP. Catalyzes the first condensation reaction which initiates fatty acid synthesis and may therefore play a role in governing the total rate of fatty acid production. Possesses both acetoacetyl-ACP synthase and acetyl transacylase activities. Its substrate specificity determines the biosynthesis of branched-chain and/or straight-chain of fatty acids. In Variovorax paradoxus (strain S110), this protein is Beta-ketoacyl-[acyl-carrier-protein] synthase III.